Reading from the N-terminus, the 39-residue chain is SPbeta prophage-derived uncharacterized protein YorT (39 aa).

The polypeptide is SPbeta prophage-derived uncharacterized protein YorT (yorT) (Bacillus subtilis (strain 168)).